The chain runs to 311 residues: Halocin-S8 (311 aa).

2 consecutive propeptides follow at residues 1-230 (MSDK…IQLQ) and 267-311 (TVAC…TSFW).

Its subcellular location is the secreted. In terms of biological role, has antibacterial activity against the haloarchaeons H.salinarium NRC817, Halobacterium GRB and H.gibbonsii. The polypeptide is Halocin-S8 (halS8) (Haloarchaeon S8a).